Reading from the N-terminus, the 449-residue chain is UDP-glycosyltransferase 76E6 (449 aa).

UDP-alpha-D-glucose is bound by residues serine 274, alanine 333 to glutamine 335, histidine 350 to glutamate 358, and histidine 372 to glutamine 375.

The protein belongs to the UDP-glycosyltransferase family.

The protein is UDP-glycosyltransferase 76E6 (UGT76E6) of Arabidopsis thaliana (Mouse-ear cress).